The primary structure comprises 274 residues: uncharacterized protein (274 aa).

This is an uncharacterized protein from Bacillus subtilis (strain 168).